Here is a 101-residue protein sequence, read N- to C-terminus: Putative pterin-4-alpha-carbinolamine dehydratase (101 aa).

The protein belongs to the pterin-4-alpha-carbinolamine dehydratase family.

It catalyses the reaction (4aS,6R)-4a-hydroxy-L-erythro-5,6,7,8-tetrahydrobiopterin = (6R)-L-erythro-6,7-dihydrobiopterin + H2O. The sequence is that of Putative pterin-4-alpha-carbinolamine dehydratase (dcoH) from Streptomyces avermitilis (strain ATCC 31267 / DSM 46492 / JCM 5070 / NBRC 14893 / NCIMB 12804 / NRRL 8165 / MA-4680).